The sequence spans 230 residues: Large ribosomal subunit protein uL1 (230 aa).

It belongs to the universal ribosomal protein uL1 family. In terms of assembly, part of the 50S ribosomal subunit.

In terms of biological role, binds directly to 23S rRNA. The L1 stalk is quite mobile in the ribosome, and is involved in E site tRNA release. Protein L1 is also a translational repressor protein, it controls the translation of the L11 operon by binding to its mRNA. In Bacillus mycoides (strain KBAB4) (Bacillus weihenstephanensis), this protein is Large ribosomal subunit protein uL1.